A 185-amino-acid chain; its full sequence is Ribosome-recycling factor (185 aa).

This sequence belongs to the RRF family.

Its subcellular location is the cytoplasm. Responsible for the release of ribosomes from messenger RNA at the termination of protein biosynthesis. May increase the efficiency of translation by recycling ribosomes from one round of translation to another. The protein is Ribosome-recycling factor of Actinobacillus pleuropneumoniae serotype 5b (strain L20).